The chain runs to 151 residues: UPF0178 protein amb2838 (151 aa).

This sequence belongs to the UPF0178 family.

In Paramagnetospirillum magneticum (strain ATCC 700264 / AMB-1) (Magnetospirillum magneticum), this protein is UPF0178 protein amb2838.